The primary structure comprises 65 residues: Alpha-like toxin Bom4 (65 aa).

One can recognise an LCN-type CS-alpha/beta domain in the interval 2–64 (RDAYIAQPEN…VPIRIPGKCH (63 aa)). Intrachain disulfides connect C12-C63, C16-C36, C22-C46, and C26-C48.

The protein belongs to the long (4 C-C) scorpion toxin superfamily. Sodium channel inhibitor family. Alpha subfamily. Expressed by the venom gland.

The protein localises to the secreted. Alpha toxins bind voltage-independently at site-3 of sodium channels (Nav) and inhibit the inactivation of the activated channels, thereby blocking neuronal transmission. This alpha-like toxin is highly toxic to mice and insects. This Buthus occitanus mardochei (Moroccan scorpion) protein is Alpha-like toxin Bom4.